A 122-amino-acid chain; its full sequence is Large ribosomal subunit protein uL14 (122 aa).

This sequence belongs to the universal ribosomal protein uL14 family. In terms of assembly, part of the 50S ribosomal subunit. Forms a cluster with proteins L3 and L19. In the 70S ribosome, L14 and L19 interact and together make contacts with the 16S rRNA in bridges B5 and B8.

Its function is as follows. Binds to 23S rRNA. Forms part of two intersubunit bridges in the 70S ribosome. The protein is Large ribosomal subunit protein uL14 of Thermoanaerobacter pseudethanolicus (strain ATCC 33223 / 39E) (Clostridium thermohydrosulfuricum).